The following is a 252-amino-acid chain: Phosphate import ATP-binding protein PstB (252 aa).

An ABC transporter domain is found at 6 to 247 (IDTRDVNFWY…PEKEATQNYI (242 aa)). ATP is bound at residue 38–45 (GPSGCGKS).

It belongs to the ABC transporter superfamily. Phosphate importer (TC 3.A.1.7) family. In terms of assembly, the complex is composed of two ATP-binding proteins (PstB), two transmembrane proteins (PstC and PstA) and a solute-binding protein (PstS).

The protein resides in the cell inner membrane. The catalysed reaction is phosphate(out) + ATP + H2O = ADP + 2 phosphate(in) + H(+). Part of the ABC transporter complex PstSACB involved in phosphate import. Responsible for energy coupling to the transport system. This chain is Phosphate import ATP-binding protein PstB, found in Bacteroides thetaiotaomicron (strain ATCC 29148 / DSM 2079 / JCM 5827 / CCUG 10774 / NCTC 10582 / VPI-5482 / E50).